Here is a 145-residue protein sequence, read N- to C-terminus: 3-dehydroquinate dehydratase (145 aa).

Tyr22 acts as the Proton acceptor in catalysis. The substrate site is built by Asn71, His77, and Asp84. The Proton donor role is filled by His97. Substrate contacts are provided by residues 98–99 and Arg108; that span reads IS.

Belongs to the type-II 3-dehydroquinase family. As to quaternary structure, homododecamer.

It carries out the reaction 3-dehydroquinate = 3-dehydroshikimate + H2O. It functions in the pathway metabolic intermediate biosynthesis; chorismate biosynthesis; chorismate from D-erythrose 4-phosphate and phosphoenolpyruvate: step 3/7. In terms of biological role, catalyzes a trans-dehydration via an enolate intermediate. In Thermotoga neapolitana (strain ATCC 49049 / DSM 4359 / NBRC 107923 / NS-E), this protein is 3-dehydroquinate dehydratase.